The chain runs to 279 residues: Large ribosomal subunit protein uL2 (279 aa).

The tract at residues 222–264 (GVAMNPVDHPHGGGEGRTSGGRNPVTPAGKPTKGAKTRVNKAT) is disordered.

The protein belongs to the universal ribosomal protein uL2 family. Part of the 50S ribosomal subunit. Forms a bridge to the 30S subunit in the 70S ribosome.

One of the primary rRNA binding proteins. Required for association of the 30S and 50S subunits to form the 70S ribosome, for tRNA binding and peptide bond formation. It has been suggested to have peptidyltransferase activity; this is somewhat controversial. Makes several contacts with the 16S rRNA in the 70S ribosome. The chain is Large ribosomal subunit protein uL2 from Caulobacter sp. (strain K31).